The sequence spans 207 residues: dTTP/UTP pyrophosphatase (207 aa).

The active-site Proton acceptor is aspartate 87.

Belongs to the Maf family. YhdE subfamily. A divalent metal cation serves as cofactor.

Its subcellular location is the cytoplasm. It carries out the reaction dTTP + H2O = dTMP + diphosphate + H(+). The enzyme catalyses UTP + H2O = UMP + diphosphate + H(+). In terms of biological role, nucleoside triphosphate pyrophosphatase that hydrolyzes dTTP and UTP. May have a dual role in cell division arrest and in preventing the incorporation of modified nucleotides into cellular nucleic acids. This chain is dTTP/UTP pyrophosphatase, found in Bordetella pertussis (strain Tohama I / ATCC BAA-589 / NCTC 13251).